A 96-amino-acid chain; its full sequence is Conantokin-E (96 aa).

The first 24 residues, 1-24, serve as a signal peptide directing secretion; the sequence is LLVPLVTFHLILGMGTLDHGGALT. The propeptide occupies 25 to 72; sequence ERRSADATALKPEPVLLQKSDARSTDDNDKDRLTQMKRILKKRGNKAR. A disordered region spans residues 28–57; that stretch reads SADATALKPEPVLLQKSDARSTDDNDKDRL. Basic and acidic residues predominate over residues 44–57; it reads SDARSTDDNDKDRL. 4-carboxyglutamate occurs at positions 75, 76, 82, 86, and 95. 2 residues coordinate a divalent metal cation: E82 and E86. C83 and C96 are oxidised to a cystine.

The protein belongs to the conotoxin B superfamily. In terms of tissue distribution, expressed by the venom duct.

It is found in the secreted. Functionally, conantokins inhibit N-methyl-D-aspartate (NMDA) receptors. This toxin has the highest potency for the NR2B/GRIN2B subunit, followed by NR2A/GRIN2A, NR2C/GRIN2C, and NR2D/GRIN2D subunits. The protein is Conantokin-E of Conus ermineus (Agate cone).